Here is a 105-residue protein sequence, read N- to C-terminus: Large ribosomal subunit protein uL24 (105 aa).

Belongs to the universal ribosomal protein uL24 family. Part of the 50S ribosomal subunit.

Functionally, one of two assembly initiator proteins, it binds directly to the 5'-end of the 23S rRNA, where it nucleates assembly of the 50S subunit. In terms of biological role, one of the proteins that surrounds the polypeptide exit tunnel on the outside of the subunit. The chain is Large ribosomal subunit protein uL24 from Xanthomonas axonopodis pv. citri (strain 306).